The chain runs to 221 residues: 7-cyano-7-deazaguanine synthase (221 aa).

ATP is bound at residue 10-20 (FSGGQDSTTCL). Zn(2+)-binding residues include C186, C195, C198, and C201.

Belongs to the QueC family. In terms of assembly, homodimer. Requires Zn(2+) as cofactor.

It catalyses the reaction 7-carboxy-7-deazaguanine + NH4(+) + ATP = 7-cyano-7-deazaguanine + ADP + phosphate + H2O + H(+). Its pathway is purine metabolism; 7-cyano-7-deazaguanine biosynthesis. Catalyzes the ATP-dependent conversion of 7-carboxy-7-deazaguanine (CDG) to 7-cyano-7-deazaguanine (preQ(0)). The protein is 7-cyano-7-deazaguanine synthase of Geobacillus kaustophilus (strain HTA426).